The chain runs to 158 residues: Ribosome maturation factor RimP (158 aa).

This sequence belongs to the RimP family.

Its subcellular location is the cytoplasm. Required for maturation of 30S ribosomal subunits. The protein is Ribosome maturation factor RimP of Deinococcus radiodurans (strain ATCC 13939 / DSM 20539 / JCM 16871 / CCUG 27074 / LMG 4051 / NBRC 15346 / NCIMB 9279 / VKM B-1422 / R1).